A 415-amino-acid chain; its full sequence is Exodeoxyribonuclease 7 large subunit (415 aa).

Belongs to the XseA family. Heterooligomer composed of large and small subunits.

It localises to the cytoplasm. The catalysed reaction is Exonucleolytic cleavage in either 5'- to 3'- or 3'- to 5'-direction to yield nucleoside 5'-phosphates.. In terms of biological role, bidirectionally degrades single-stranded DNA into large acid-insoluble oligonucleotides, which are then degraded further into small acid-soluble oligonucleotides. In Mycobacterium bovis (strain ATCC BAA-935 / AF2122/97), this protein is Exodeoxyribonuclease 7 large subunit.